We begin with the raw amino-acid sequence, 266 residues long: Hydroxyethylthiazole kinase (266 aa).

A substrate-binding site is contributed by Met-39. ATP is bound by residues Lys-115 and Thr-160. Gly-187 is a substrate binding site.

It belongs to the Thz kinase family. It depends on Mg(2+) as a cofactor.

It catalyses the reaction 5-(2-hydroxyethyl)-4-methylthiazole + ATP = 4-methyl-5-(2-phosphooxyethyl)-thiazole + ADP + H(+). Its pathway is cofactor biosynthesis; thiamine diphosphate biosynthesis; 4-methyl-5-(2-phosphoethyl)-thiazole from 5-(2-hydroxyethyl)-4-methylthiazole: step 1/1. Functionally, catalyzes the phosphorylation of the hydroxyl group of 4-methyl-5-beta-hydroxyethylthiazole (THZ). This Staphylococcus aureus (strain MSSA476) protein is Hydroxyethylthiazole kinase.